Consider the following 387-residue polypeptide: Cytochrome b (387 aa).

The next 4 membrane-spanning stretches (helical) occupy residues Phe32–Met52, Trp76–Gly98, Val113–Val133, and Phe179–Ile199. The heme b site is built by His82 and His96. 2 residues coordinate heme b: His183 and His197. His202 contacts a ubiquinone. A run of 4 helical transmembrane segments spans residues Tyr226 to Phe246, Leu290 to Asp310, Leu322 to Ala342, and Phe349 to Pro369.

It belongs to the cytochrome b family. As to quaternary structure, fungal cytochrome b-c1 complex contains 10 subunits; 3 respiratory subunits, 2 core proteins and 5 low-molecular weight proteins. Cytochrome b-c1 complex is a homodimer. Heme b serves as cofactor.

It localises to the mitochondrion inner membrane. Functionally, component of the ubiquinol-cytochrome c reductase complex (complex III or cytochrome b-c1 complex) that is part of the mitochondrial respiratory chain. The b-c1 complex mediates electron transfer from ubiquinol to cytochrome c. Contributes to the generation of a proton gradient across the mitochondrial membrane that is then used for ATP synthesis. The sequence is that of Cytochrome b (COB) from Podospora anserina (strain S / ATCC MYA-4624 / DSM 980 / FGSC 10383) (Pleurage anserina).